Consider the following 97-residue polypeptide: YcgL domain-containing protein PFLU_1517 (97 aa).

Positions 3–87 (RICSIYRSKK…AEDEYIEHLP (85 aa)) constitute a YcgL domain.

This is YcgL domain-containing protein PFLU_1517 from Pseudomonas fluorescens (strain SBW25).